A 978-amino-acid polypeptide reads, in one-letter code: Regulator of MON1-CCZ1 complex homolog (978 aa).

Composition is skewed to low complexity over residues 311 to 351 (TSTP…MISS) and 479 to 495 (NNNN…NNNN). 4 disordered regions span residues 311-363 (TSTP…HKEQ), 474-546 (SINQ…NSKT), 558-665 (KQQQ…NNHV), and 703-727 (EKEK…NNNI). The segment covering 496–515 (TAQTLNSTGNLSNSISIGGM) has biased composition (polar residues). The segment covering 516–539 (NTSTDNLTTTTTTSSSISSSPSNS) has biased composition (low complexity). Residues 582–591 (GDGGSGGSGG) show a composition bias toward gly residues. 2 stretches are compositionally biased toward low complexity: residues 592-663 (SFYN…NNNN) and 710-727 (NNNN…NNNI). A Mic1 domain is found at 735–908 (KLELDSKYLI…HPSFDKYIKL (174 aa)). The interval 955-978 (NNSSPTLRSSNSLNSSPRLQYSNN) is disordered.

It belongs to the RMC1 family.

Its subcellular location is the lysosome membrane. It is found in the late endosome membrane. May have a role in autophagy. The sequence is that of Regulator of MON1-CCZ1 complex homolog from Dictyostelium discoideum (Social amoeba).